The following is a 1270-amino-acid chain: Myosin-1 (1270 aa).

Residues 1–40 are disordered; it reads MGHSRRPAGGEKKSRGFGRSKAAADVGDGRQAGKPQVKKA. The 680-residue stretch at 50-729 folds into the Myosin motor domain; it reads IGVSDLTLLS…TLFALETMRD (680 aa). 143-150 is an ATP binding site; sequence GESGAGKT. The residue at position 371 (serine 371) is a Phosphoserine. The actin-binding stretch occupies residues 418–500; sequence SIGILDIYGF…PGVFAALNDA (83 aa). IQ domains are found at residues 733–753 and 754–779; these read HNMA…RIEC and AIRI…QGHQ. Residues 787 to 980 enclose the TH1 domain; the sequence is RRRMSLLGSR…TIHTSAGEPP (194 aa). Disordered regions lie at residues 960-1102 and 1144-1270; these read GASN…VLYD and PEAY…DDEW. Residues 963-974 are compositionally biased toward polar residues; that stretch reads NVDSYKSSTIHT. A compositionally biased stretch (pro residues) spans 1023–1058; sequence ARQPMPQPTPQPAAVQPPPAPRPAVSPAAQPRPVPQ. Residues 1059–1078 show a composition bias toward low complexity; it reads PVAAVAAAQHTRNASSSSTR. Positions 1079–1088 are enriched in pro residues; that stretch reads APPPPPPATP. Positions 1092 to 1153 constitute an SH3 domain; it reads QRKPMAKVLY…PEAYLEEQVA (62 aa). The segment covering 1157–1167 has biased composition (pro residues); it reads KPAPPPPPPAA. Composition is skewed to low complexity over residues 1168 to 1186 and 1238 to 1252; these read PRAS…VAAK and NSAS…LAEA.

Belongs to the TRAFAC class myosin-kinesin ATPase superfamily. Myosin family. Phosphorylation of the TEDS site (Ser-371) is required for the polarization of the actin cytoskeleton. Phosphorylation probably activates the myosin-I ATPase activity.

Its subcellular location is the cytoplasm. The protein localises to the cytoskeleton. It is found in the actin patch. In terms of biological role, type-I myosin implicated in the organization of the actin cytoskeleton. Required for proper actin cytoskeleton polarization. At the cell cortex, assembles in patch-like structures together with proteins from the actin-polymerizing machinery and promotes actin assembly. Functions as actin nucleation-promoting factor (NPF) for the Arp2/3 complex. Plays an important role in polarized growth, spore germination, hyphal morphogenesis, and septal wall formation. This is Myosin-1 (myoA) from Aspergillus niger (strain ATCC MYA-4892 / CBS 513.88 / FGSC A1513).